We begin with the raw amino-acid sequence, 509 residues long: Maturase K (509 aa).

This sequence belongs to the intron maturase 2 family. MatK subfamily.

The protein resides in the plastid. The protein localises to the chloroplast. In terms of biological role, usually encoded in the trnK tRNA gene intron. Probably assists in splicing its own and other chloroplast group II introns. The protein is Maturase K of Citrus sinensis (Sweet orange).